Consider the following 763-residue polypeptide: Thyrotropin receptor (763 aa).

Positions 1-21 are cleaved as a signal peptide; it reads MRPTPLLRLALFLVLPSSLGG. Residues 22-412 lie on the Extracellular side of the membrane; it reads ERCPSPPCEC…EFNPCEDIMG (391 aa). Cysteines 31 and 41 form a disulfide. One copy of the LRR 1 repeat lies at 51 to 74; sequence PPSTQTLKFIETHLKTIPSRAFSN. Residues N77 and N99 are each glycosylated (N-linked (GlcNAc...) asparagine). LRR repeat units follow at residues 125-150, 151-174, 176-199, 201-223, and 225-248; these read LPLLKFLGIFNTGLRVFPDLTKIYST, DVFFILEITDNPYMTSIPANAFQG, CNETLTLKLYNNGFTSIQGHAFNG, KLDAVYLNKNKYLTVIGQDAFAG, and YSGPTLLDISYTSVTALPSKGLEH. N-linked (GlcNAc...) asparagine glycans are attached at residues N177 and N198. An N-linked (GlcNAc...) asparagine glycan is attached at N302. A Sulfotyrosine modification is found at Y384. The chain crosses the membrane as a helical span at residues 413–440; it reads YKFLRIVVWFVSLLALLGNVFVLVILLT. Residues 441 to 449 are Cytoplasmic-facing; sequence SHYKLTVPR. Residues 450-472 form a helical membrane-spanning segment; it reads FLMCNLAFADFCMGLYLLLIASV. Over 473–493 the chain is Extracellular; it reads DLYTQSEYYNHAIDWQTGPGC. A disulfide bridge connects residues C493 and C568. Residues 494-516 form a helical membrane-spanning segment; that stretch reads NTAGFFTVFASELSVYTLTVITL. The Cytoplasmic segment spans residues 517-536; it reads ERWHAITFAMRLDRKIRLWH. Residues 537 to 559 form a helical membrane-spanning segment; the sequence is AYVIMLGGWVCCFLLALLPLVGI. Residues 560–579 lie on the Extracellular side of the membrane; the sequence is SSYAKVSICLPMDTETPLAL. A helical transmembrane segment spans residues 580 to 601; sequence AYIILVLLLNIIAFIIVCACYV. The Cytoplasmic portion of the chain corresponds to 602–624; the sequence is KIYITVRNPHYNPGDKDTRIAKR. The chain crosses the membrane as a helical span at residues 625–648; it reads MAVLIFTDFMCMAPISFYALSALM. Topologically, residues 649 to 659 are extracellular; the sequence is NKPLITVTNSK. The chain crosses the membrane as a helical span at residues 660-681; the sequence is ILLVLFYPLNSCANPFLYAIFT. Topologically, residues 682–763 are cytoplasmic; the sequence is KAFQRDVFML…TSKEYKRTVL (82 aa). Residues 742–763 form a disordered region; the sequence is ENSHLTPKQQDQTSKEYKRTVL. The span at 744-753 shows a compositional bias: polar residues; it reads SHLTPKQQDQ. Basic and acidic residues predominate over residues 754 to 763; the sequence is TSKEYKRTVL. The PDZ-binding motif lies at 761-763; it reads TVL.

The protein belongs to the G-protein coupled receptor 1 family. FSH/LSH/TSH subfamily. In terms of assembly, interacts with heterodimer GPHA2:GPHB5; this interaction stimulates cAMP production. Interacts (via the PDZ-binding motif) with SCRIB; regulates TSHR trafficking and function. Post-translationally, glycosylated. Sulfated. Sulfation on Tyr-384 plays a role in thyrotropin receptor binding and activation.

Its subcellular location is the cell membrane. The protein localises to the basolateral cell membrane. Its function is as follows. Receptor for the thyroid-stimulating hormone (TSH) or thyrotropin. Also acts as a receptor for the heterodimeric glycoprotein hormone (GPHA2:GPHB5) or thyrostimulin. The activity of this receptor is mediated by G proteins which activate adenylate cyclase. Plays a central role in controlling thyroid cell metabolism. This Bos taurus (Bovine) protein is Thyrotropin receptor (TSHR).